Here is a 92-residue protein sequence, read N- to C-terminus: Regakine-1 (92 aa).

The first 21 residues, 1–21 (MRVSLAALAFLLTLAVLHSEA), serve as a signal peptide directing secretion. 2 disulfide bridges follow: cysteine 32-cysteine 56 and cysteine 33-cysteine 72.

It belongs to the intercrine beta (chemokine CC) family. As to expression, plasma serum.

It localises to the secreted. Its function is as follows. Chemotactic activity for neutrophils and lymphocytes. Binds to heparin. This chain is Regakine-1, found in Bos taurus (Bovine).